Here is a 563-residue protein sequence, read N- to C-terminus: Arginine--tRNA ligase (563 aa).

The 'HIGH' region motif lies at 120-130 (PNIAKPFHIGH).

This sequence belongs to the class-I aminoacyl-tRNA synthetase family. As to quaternary structure, monomer.

Its subcellular location is the cytoplasm. The enzyme catalyses tRNA(Arg) + L-arginine + ATP = L-arginyl-tRNA(Arg) + AMP + diphosphate. This is Arginine--tRNA ligase from Clostridium botulinum (strain Loch Maree / Type A3).